The primary structure comprises 103 residues: Large ribosomal subunit protein bL21 (103 aa).

The protein belongs to the bacterial ribosomal protein bL21 family. In terms of assembly, part of the 50S ribosomal subunit. Contacts protein L20.

Its function is as follows. This protein binds to 23S rRNA in the presence of protein L20. In Aeromonas hydrophila subsp. hydrophila (strain ATCC 7966 / DSM 30187 / BCRC 13018 / CCUG 14551 / JCM 1027 / KCTC 2358 / NCIMB 9240 / NCTC 8049), this protein is Large ribosomal subunit protein bL21.